A 145-amino-acid polypeptide reads, in one-letter code: UPF0102 protein BAV3162 (145 aa).

Belongs to the UPF0102 family.

The chain is UPF0102 protein BAV3162 from Bordetella avium (strain 197N).